A 216-amino-acid polypeptide reads, in one-letter code: Small ribosomal subunit protein uS3c (216 aa).

Positions 43–118 constitute a KH type-2 domain; that stretch reads IKNYIQKNRR…KLNIAIVKVT (76 aa).

This sequence belongs to the universal ribosomal protein uS3 family. In terms of assembly, part of the 30S ribosomal subunit.

Its subcellular location is the plastid. It is found in the chloroplast. The polypeptide is Small ribosomal subunit protein uS3c (rps3) (Phaseolus angularis (Azuki bean)).